Reading from the N-terminus, the 129-residue chain is Acyl carrier protein 2, chloroplastic (129 aa).

A chloroplast-targeting transit peptide spans 1–49 (MASAAASAVSFARPVKAICVNSVSFSALRKDNVSFRLQPVPQRFSVCCA). Residues 52–127 (KETVEKVCDI…DAANLIDSLV (76 aa)) enclose the Carrier domain. Position 87 is an O-(pantetheine 4'-phosphoryl)serine (Ser87).

This sequence belongs to the acyl carrier protein (ACP) family. 4'-phosphopantetheine is transferred from CoA to a specific serine of apo-ACP by acpS. This modification is essential for activity because fatty acids are bound in thioester linkage to the sulfhydryl of the prosthetic group.

The protein localises to the plastid. Its subcellular location is the chloroplast. Its pathway is lipid metabolism; fatty acid biosynthesis. Carrier of the growing fatty acid chain in fatty acid biosynthesis. This chain is Acyl carrier protein 2, chloroplastic (ACL1.2), found in Hordeum vulgare (Barley).